The chain runs to 178 residues: Putative RING-H2 finger protein ATL19 (178 aa).

The helical transmembrane segment at Leu-11 to Ile-31 threads the bilayer. An RING-type; atypical zinc finger spans residues Cys-130–Arg-172.

The protein belongs to the RING-type zinc finger family. ATL subfamily.

The protein localises to the membrane. The enzyme catalyses S-ubiquitinyl-[E2 ubiquitin-conjugating enzyme]-L-cysteine + [acceptor protein]-L-lysine = [E2 ubiquitin-conjugating enzyme]-L-cysteine + N(6)-ubiquitinyl-[acceptor protein]-L-lysine.. The protein operates within protein modification; protein ubiquitination. This Arabidopsis thaliana (Mouse-ear cress) protein is Putative RING-H2 finger protein ATL19 (ATL19).